Here is a 419-residue protein sequence, read N- to C-terminus: Serine hydroxymethyltransferase (419 aa).

(6S)-5,6,7,8-tetrahydrofolate contacts are provided by residues Leu-121 and 125–127 (GHL). N6-(pyridoxal phosphate)lysine is present on Lys-230. Position 355–357 (355–357 (SPF)) interacts with (6S)-5,6,7,8-tetrahydrofolate.

It belongs to the SHMT family. Homodimer. Requires pyridoxal 5'-phosphate as cofactor.

The protein localises to the cytoplasm. The catalysed reaction is (6R)-5,10-methylene-5,6,7,8-tetrahydrofolate + glycine + H2O = (6S)-5,6,7,8-tetrahydrofolate + L-serine. It functions in the pathway one-carbon metabolism; tetrahydrofolate interconversion. Its pathway is amino-acid biosynthesis; glycine biosynthesis; glycine from L-serine: step 1/1. Its function is as follows. Catalyzes the reversible interconversion of serine and glycine with tetrahydrofolate (THF) serving as the one-carbon carrier. This reaction serves as the major source of one-carbon groups required for the biosynthesis of purines, thymidylate, methionine, and other important biomolecules. Also exhibits THF-independent aldolase activity toward beta-hydroxyamino acids, producing glycine and aldehydes, via a retro-aldol mechanism. This is Serine hydroxymethyltransferase from Streptococcus equi subsp. zooepidemicus (strain H70).